Here is a 581-residue protein sequence, read N- to C-terminus: Arginine--tRNA ligase (581 aa).

The 'HIGH' region motif lies at 122 to 132; it reads PNVAKPMHVGH.

The protein belongs to the class-I aminoacyl-tRNA synthetase family. In terms of assembly, monomer.

It localises to the cytoplasm. The enzyme catalyses tRNA(Arg) + L-arginine + ATP = L-arginyl-tRNA(Arg) + AMP + diphosphate. This is Arginine--tRNA ligase from Francisella tularensis subsp. novicida (strain U112).